Consider the following 392-residue polypeptide: Neutrophil cytosol factor 1 (392 aa).

Residues 4–125 (HFIRHIALLG…NFFKVRPDDL (122 aa)) enclose the PX domain. SH3 domains lie at 156–215 (IILQ…PLDS) and 226–285 (YAGE…KAGQ). The segment at 290 to 392 (AKSQIKSRGA…STKRKLASAV (103 aa)) is disordered. A phosphoserine mark is found at Ser304 and Ser305. The span at 310 to 319 (HSIHQRSRKR) shows a compositional bias: basic residues. Phosphoserine is present on residues Ser321, Ser329, and Ser348. Residues 376-385 (ILHRCSESTK) are compositionally biased toward basic and acidic residues.

Component of the phagocyte NADPH oxidase complex composed of an obligatory core heterodimer formed by the membrane proteins CYBA and CYBB and the cytosolic regulatory subunits NCF1/p47-phox, NCF2/p67-phox, NCF4/p40-phox and the small GTPase RAC1 or RAC2. Part of a cytosolic complex composed at least by NCF1, NCF2 and NCF4. Interacts (via C-terminus) with NCF2 (via the C-terminal SH3 domain). Interacts with NCF4. Interacts with CYBB. Interacts (via the second SH3 domain) with CYBA; interaction is phosphorylation-dependent. Interacts with NOXA1. Interacts with ADAM15. Interacts with TRAF4. Interacts with FASLG. Interacts with PARK7 (via C-terminus); the interaction is enhanced by LPS and modulates NCF1 phosphorylation and membrane translocation. Phosphorylated by PRKCD; phosphorylation induces activation of NCF1, leading to assembly and activation of the NADPH oxidase complex.

The protein resides in the cytoplasm. Its subcellular location is the cytosol. The protein localises to the membrane. In terms of biological role, subunit of the phagocyte NADPH oxidase complex that mediates the transfer of electrons from cytosolic NADPH to O2 to produce the superoxide anion (O2(-)). In the activated complex, electrons are first transferred from NADPH to flavin adenine dinucleotide (FAD) and subsequently transferred via two heme molecules to molecular oxygen, producing superoxide through an outer-sphere reaction. Activation of the NADPH oxidase complex is initiated by the assembly of cytosolic subunits of the NADPH oxidase complex with the core NADPH oxidase complex to form a complex at the plasma membrane or phagosomal membrane. This activation process is initiated by phosphorylation dependent binding of the cytosolic NCF1/p47-phox subunit to the C-terminus of CYBA/p22-phox. This chain is Neutrophil cytosol factor 1, found in Bos taurus (Bovine).